Consider the following 430-residue polypeptide: Glutamate-1-semialdehyde 2,1-aminomutase (430 aa).

Lys-265 bears the N6-(pyridoxal phosphate)lysine mark.

This sequence belongs to the class-III pyridoxal-phosphate-dependent aminotransferase family. HemL subfamily. As to quaternary structure, homodimer. The cofactor is pyridoxal 5'-phosphate.

It is found in the cytoplasm. It carries out the reaction (S)-4-amino-5-oxopentanoate = 5-aminolevulinate. Its pathway is porphyrin-containing compound metabolism; protoporphyrin-IX biosynthesis; 5-aminolevulinate from L-glutamyl-tRNA(Glu): step 2/2. The protein is Glutamate-1-semialdehyde 2,1-aminomutase of Shewanella sp. (strain ANA-3).